We begin with the raw amino-acid sequence, 962 residues long: Leucine--tRNA ligase (962 aa).

The 'HIGH' region signature appears at 68 to 79 (PYPSGAGLHVGH). The tract at residues 559–582 (DYSPRTFDPDDANTSPETPLSRNE) is disordered. The segment covering 570-579 (ANTSPETPLS) has biased composition (polar residues). The 'KMSKS' region motif lies at 733-737 (KMGKS). Lysine 736 lines the ATP pocket.

It belongs to the class-I aminoacyl-tRNA synthetase family.

It is found in the cytoplasm. It catalyses the reaction tRNA(Leu) + L-leucine + ATP = L-leucyl-tRNA(Leu) + AMP + diphosphate. The protein is Leucine--tRNA ligase of Streptomyces avermitilis (strain ATCC 31267 / DSM 46492 / JCM 5070 / NBRC 14893 / NCIMB 12804 / NRRL 8165 / MA-4680).